A 1047-amino-acid chain; its full sequence is Cation efflux system protein CusA (1047 aa).

Transmembrane regions (helical) follow at residues Phe-14 to Thr-34, Leu-338 to Trp-358, Ala-363 to Phe-383, Met-391 to Ile-411, Val-446 to Thr-466, Ala-485 to Ile-505, Val-532 to Trp-552, Lys-871 to Phe-891, Leu-898 to Met-918, Thr-928 to Leu-948, Ala-985 to Gly-1005, and Ile-1012 to Pro-1032.

This sequence belongs to the resistance-nodulation-cell division (RND) (TC 2.A.6) family. The cus efflux system is composed of CusA, CusB, CusC and CusF.

Its subcellular location is the cell inner membrane. In terms of biological role, part of a cation efflux system that mediates resistance to copper and silver. The sequence is that of Cation efflux system protein CusA (cusA) from Escherichia coli (strain K12).